The primary structure comprises 260 residues: MKSPVAGAVLDPSTPPPTTGTSWRWPGLRDADPYREARLRMVEQLRRSGLVTSRRVLEAMARVPRHLFVPPEYRGMAYEDRPLPIGHGQTISAPGVVGRMLQLLDPQPGEKVLDVGAGSGYQSALLAELVTPGGRVYAVERIPELAEYARENLEKTGYRGVVEVVVGDGSKGLPQHAPYHRIKVAAAAPKPPKPLVEQLAPGGRMVIPIGTPDLQILTIIEKTPDGRVRERRDIEVLFVPLIGEHGYREDWRKQYWQWWR.

Residues 1–27 (MKSPVAGAVLDPSTPPPTTGTSWRWPG) are disordered. Serine 92 is a catalytic residue.

This sequence belongs to the methyltransferase superfamily. L-isoaspartyl/D-aspartyl protein methyltransferase family.

The protein resides in the cytoplasm. The catalysed reaction is [protein]-L-isoaspartate + S-adenosyl-L-methionine = [protein]-L-isoaspartate alpha-methyl ester + S-adenosyl-L-homocysteine. Functionally, catalyzes the methyl esterification of L-isoaspartyl residues in peptides and proteins that result from spontaneous decomposition of normal L-aspartyl and L-asparaginyl residues. It plays a role in the repair and/or degradation of damaged proteins. The sequence is that of Protein-L-isoaspartate O-methyltransferase (pcm) from Aeropyrum pernix (strain ATCC 700893 / DSM 11879 / JCM 9820 / NBRC 100138 / K1).